A 177-amino-acid chain; its full sequence is Endoribonuclease YbeY (177 aa).

H118, H122, and H128 together coordinate Zn(2+).

The protein belongs to the endoribonuclease YbeY family. The cofactor is Zn(2+).

The protein resides in the cytoplasm. Functionally, single strand-specific metallo-endoribonuclease involved in late-stage 70S ribosome quality control and in maturation of the 3' terminus of the 16S rRNA. This Mycobacterium sp. (strain JLS) protein is Endoribonuclease YbeY.